The sequence spans 1437 residues: Protein CC2D2B (1437 aa).

In Homo sapiens (Human), this protein is Protein CC2D2B.